The sequence spans 672 residues: Synaptotagmin-like protein 4 (672 aa).

The region spanning 4-122 (ILDLSFLSEM…KATGDWFYDQ (119 aa)) is the RabBD domain. The FYVE-type zinc finger occupies 63 to 105 (CARCQEGLGRLISKSNTCVGCNHLVCRECRVLESNGSWRCKVC). The segment at 199–222 (SESLDSYTADSDSTSRRDSLDKSG) is disordered. A phosphoserine mark is found at Ser201, Ser204, Ser217, Ser221, and Ser274. The 123-residue stretch at 357–479 (VTGKIAFSLK…KLDKKLDHCL (123 aa)) folds into the C2 1 domain. At Ser489 the chain carries Phosphoserine. The 127-residue stretch at 508–634 (PASKLPVGGD…ISSGEVVDWM (127 aa)) folds into the C2 2 domain.

In terms of assembly, part of a ternary complex containing STX1A and RAB27A. Can bind both dominant negative and dominant active mutants of RAB27A. Binds STXBP1, RAB3A, RAB8A and RAB27B. Interacts with MYO5A. In terms of tissue distribution, detected in insulin-secreting cell lines.

The protein localises to the membrane. It is found in the cytoplasmic vesicle. Its subcellular location is the secretory vesicle membrane. Its function is as follows. Modulates exocytosis of dense-core granules and secretion of hormones in the pancreas and the pituitary. Interacts with vesicles containing negatively charged phospholipids in a Ca(2+)-independent manner. This Rattus norvegicus (Rat) protein is Synaptotagmin-like protein 4 (Sytl4).